The primary structure comprises 151 residues: D-aminoacyl-tRNA deacylase (151 aa).

Residues 138–139 (GP) carry the Gly-cisPro motif, important for rejection of L-amino acids motif.

The protein belongs to the DTD family. As to quaternary structure, homodimer.

It is found in the cytoplasm. It carries out the reaction glycyl-tRNA(Ala) + H2O = tRNA(Ala) + glycine + H(+). The enzyme catalyses a D-aminoacyl-tRNA + H2O = a tRNA + a D-alpha-amino acid + H(+). Its function is as follows. An aminoacyl-tRNA editing enzyme that deacylates mischarged D-aminoacyl-tRNAs. Also deacylates mischarged glycyl-tRNA(Ala), protecting cells against glycine mischarging by AlaRS. Acts via tRNA-based rather than protein-based catalysis; rejects L-amino acids rather than detecting D-amino acids in the active site. By recycling D-aminoacyl-tRNA to D-amino acids and free tRNA molecules, this enzyme counteracts the toxicity associated with the formation of D-aminoacyl-tRNA entities in vivo and helps enforce protein L-homochirality. This is D-aminoacyl-tRNA deacylase from Magnetococcus marinus (strain ATCC BAA-1437 / JCM 17883 / MC-1).